A 426-amino-acid chain; its full sequence is Histidine--tRNA ligase (426 aa).

It belongs to the class-II aminoacyl-tRNA synthetase family. Homodimer.

Its subcellular location is the cytoplasm. The enzyme catalyses tRNA(His) + L-histidine + ATP = L-histidyl-tRNA(His) + AMP + diphosphate + H(+). The sequence is that of Histidine--tRNA ligase from Malacoplasma penetrans (strain HF-2) (Mycoplasma penetrans).